The primary structure comprises 293 residues: Ribosomal protein L11 methyltransferase (293 aa).

4 residues coordinate S-adenosyl-L-methionine: Thr145, Gly166, Asp188, and Asn230.

The protein belongs to the methyltransferase superfamily. PrmA family.

It localises to the cytoplasm. It catalyses the reaction L-lysyl-[protein] + 3 S-adenosyl-L-methionine = N(6),N(6),N(6)-trimethyl-L-lysyl-[protein] + 3 S-adenosyl-L-homocysteine + 3 H(+). Functionally, methylates ribosomal protein L11. This Shigella sonnei (strain Ss046) protein is Ribosomal protein L11 methyltransferase.